The primary structure comprises 417 residues: NADH-quinone oxidoreductase subunit D (417 aa).

It belongs to the complex I 49 kDa subunit family. NDH-1 is composed of 14 different subunits. Subunits NuoB, C, D, E, F, and G constitute the peripheral sector of the complex.

The protein localises to the cell inner membrane. It catalyses the reaction a quinone + NADH + 5 H(+)(in) = a quinol + NAD(+) + 4 H(+)(out). Functionally, NDH-1 shuttles electrons from NADH, via FMN and iron-sulfur (Fe-S) centers, to quinones in the respiratory chain. The immediate electron acceptor for the enzyme in this species is believed to be ubiquinone. Couples the redox reaction to proton translocation (for every two electrons transferred, four hydrogen ions are translocated across the cytoplasmic membrane), and thus conserves the redox energy in a proton gradient. This is NADH-quinone oxidoreductase subunit D from Burkholderia multivorans (strain ATCC 17616 / 249).